The sequence spans 616 residues: METVDTSQRLACLRELMKERKVDVYLVPSEDSHQSEYIAPCDGRREFISGFSGSAGCAIVSMTKAALSTDGRYFNQASKQLDNNWLLLKRGIESMPTWQEWTAEQLEGGKVVGVDPSLITASDARSLSETIKKSGGSLLGLQENLVDLVWGKDRPSRPSKKVTVHPVEFAGKSFEEKITDLRKELEKKKSAGFVVSMLDEIAWLFNLRGNDIPYNPVFFAYAIITPSTADLYIDEDKLSADVKKHLGDKVSLKPYTSIFEDAKALGQSAQAEVNGGASDPPRKFFISTKASWSLSLALGGENKVEEVRSPISDAKAIKNDAELEGMRACHIRDGAALTKYFAWLENELLNKKTVLNEVEASDKLEEIRSKQKNFVGLSFDTISSSGPNAAVIHYKAERNNCSIIDPEAVYLCDSGAQYLDGTTDTTRTLHFGEPTEKERKAYTLVLKGMIAIDTAIFPKGTTGFSLDTFARQFLWKEGLDYLHGTGHGVGSYLNVHEGPIGIGTRVQYSEVPISAGNVISDEPGFYEDGNFGIRIENIIMAREVKTTFSFGERPWLGFEHVTMTPLCRKLTDPSLLSDAEKIWINEYHNEVWEKTSGYFEEDELTRNWLKRETQPI.

Residues Asp-413, Asp-424, Glu-522, and Glu-536 each contribute to the Mn(2+) site.

The protein belongs to the peptidase M24B family. The cofactor is Mn(2+).

The enzyme catalyses Release of any N-terminal amino acid, including proline, that is linked to proline, even from a dipeptide or tripeptide.. Functionally, catalyzes the removal of a penultimate prolyl residue from the N-termini of peptides. The sequence is that of Probable Xaa-Pro aminopeptidase P (AMPP) from Paracoccidioides lutzii (strain ATCC MYA-826 / Pb01) (Paracoccidioides brasiliensis).